The primary structure comprises 78 residues: Small ribosomal subunit protein bS18 (78 aa).

This sequence belongs to the bacterial ribosomal protein bS18 family. Part of the 30S ribosomal subunit. Forms a tight heterodimer with protein bS6.

Its function is as follows. Binds as a heterodimer with protein bS6 to the central domain of the 16S rRNA, where it helps stabilize the platform of the 30S subunit. The polypeptide is Small ribosomal subunit protein bS18 (Clostridium novyi (strain NT)).